A 935-amino-acid chain; its full sequence is Inter-alpha-trypsin inhibitor heavy chain H2 (935 aa).

The N-terminal stretch at M1–G18 is a signal peptide. Residues F19–Q53 constitute a propeptide that is removed on maturation. The 130-residue stretch at V45–E174 folds into the VIT domain. Residue N107 is glycosylated (N-linked (GlcNAc...) asparagine). Residue E271 is modified to 4-carboxyglutamate. Positions P297–D457 constitute a VWFA domain. N-linked (GlcNAc...) asparagine glycosylation is present at N434. S455 is subject to Phosphoserine. D691 is modified (aspartate 1-(chondroitin 4-sulfate)-ester). Positions P692–P935 are excised as a propeptide. S875 carries the phosphoserine modification.

The protein belongs to the ITIH family. I-alpha-I plasma protease inhibitors are assembled from one or two heavy chains (HC) and one light chain, bikunin. Inter-alpha-inhibitor (I-alpha-I) is composed of ITIH1/HC1, ITIH2/HC2 and bikunin. In terms of processing, heavy chains are linked to bikunin via chondroitin 4-sulfate esterified to the alpha-carboxyl of the C-terminal aspartate after propeptide cleavage. Phosphorylated by FAM20C in the extracellular medium.

It localises to the secreted. In terms of biological role, may act as a carrier of hyaluronan in serum or as a binding protein between hyaluronan and other matrix protein, including those on cell surfaces in tissues to regulate the localization, synthesis and degradation of hyaluronan which are essential to cells undergoing biological processes. The chain is Inter-alpha-trypsin inhibitor heavy chain H2 (ITIH2) from Sus scrofa (Pig).